Consider the following 250-residue polypeptide: Malonyl-[acyl-carrier protein] O-methyltransferase (250 aa).

It belongs to the methyltransferase superfamily.

It catalyses the reaction malonyl-[ACP] + S-adenosyl-L-methionine = malonyl-[ACP] methyl ester + S-adenosyl-L-homocysteine. Its pathway is cofactor biosynthesis; biotin biosynthesis. Its function is as follows. Converts the free carboxyl group of a malonyl-thioester to its methyl ester by transfer of a methyl group from S-adenosyl-L-methionine (SAM). It allows to synthesize pimeloyl-ACP via the fatty acid synthetic pathway. In Neorickettsia risticii (strain Illinois), this protein is Malonyl-[acyl-carrier protein] O-methyltransferase.